The following is a 90-amino-acid chain: DNA-directed RNA polymerase subunit omega (90 aa).

It belongs to the RNA polymerase subunit omega family. The RNAP catalytic core consists of 2 alpha, 1 beta, 1 beta' and 1 omega subunit. When a sigma factor is associated with the core the holoenzyme is formed, which can initiate transcription.

It carries out the reaction RNA(n) + a ribonucleoside 5'-triphosphate = RNA(n+1) + diphosphate. In terms of biological role, promotes RNA polymerase assembly. Latches the N- and C-terminal regions of the beta' subunit thereby facilitating its interaction with the beta and alpha subunits. This is DNA-directed RNA polymerase subunit omega from Histophilus somni (strain 129Pt) (Haemophilus somnus).